The sequence spans 90 residues: Large ribosomal subunit protein eL37 (90 aa).

Residues 13 to 46 (NKSHTLCNRCGRRSFHVQKKTCSSCGYPAAKMRS) form an A20-type zinc finger. Zn(2+) contacts are provided by Cys19, Cys22, Cys34, and Cys37.

The protein belongs to the eukaryotic ribosomal protein eL37 family. Component of the large ribosomal subunit. Mature ribosomes consist of a small (40S) and a large (60S) subunit. The 40S subunit contains about 32 different proteins and 1 molecule of RNA (18S). The 60S subunit contains 45 different proteins and 3 molecules of RNA (25S, 5.8S and 5S). Requires Zn(2+) as cofactor.

It is found in the cytoplasm. Functionally, component of the ribosome, a large ribonucleoprotein complex responsible for the synthesis of proteins in the cell. The small ribosomal subunit (SSU) binds messenger RNAs (mRNAs) and translates the encoded message by selecting cognate aminoacyl-transfer RNA (tRNA) molecules. The large subunit (LSU) contains the ribosomal catalytic site termed the peptidyl transferase center (PTC), which catalyzes the formation of peptide bonds, thereby polymerizing the amino acids delivered by tRNAs into a polypeptide chain. The nascent polypeptides leave the ribosome through a tunnel in the LSU and interact with protein factors that function in enzymatic processing, targeting, and the membrane insertion of nascent chains at the exit of the ribosomal tunnel. The sequence is that of Large ribosomal subunit protein eL37 from Candida albicans (strain SC5314 / ATCC MYA-2876) (Yeast).